The chain runs to 451 residues: Cobalamin reductase PduS (451 aa).

2 consecutive 4Fe-4S ferredoxin-type domains span residues Thr255 to Ser284 and Pro300 to Asn330. Residues Cys264, Cys267, Cys270, Cys274, Cys309, Cys312, Cys315, and Cys320 each contribute to the [4Fe-4S] cluster site.

This sequence belongs to the PduS cobalamin reductase family. In terms of assembly, monomeric when purified anaerobically, dimeric under aerobic conditions. Forms a complex with PduO. Interacts with PduT, probably via the N-terminus of PduS. It depends on [4Fe-4S] cluster as a cofactor. The cofactor is FMN.

Its subcellular location is the bacterial microcompartment. It participates in polyol metabolism; 1,2-propanediol degradation. Functionally, a protein that aids in conversion of cob(III)alamin to cob(II)alamin and then to cob(I)alamin in the bacterial microcompartment (BMC) dedicated to 1,2-propanediol (1,2-PD) degradation. The latter step requires PduO. No free cob(I)alamin is released, suggesting a complex is formed with PduO that finishes conversion to adenosylcobalamin. PduS and PduO allow regeneration of the adenosylcobalamin cofactor within the BMC. Another study showed reduction of cob(II)alamin to cob(I)alamin in the absence of PduO. Both reactions require NADH. Cyanocobalamin (CN-Cbl) is not a substrate for the first reaction. Cobalamin reduction probably occurs spontaneously in the presence of free reduced flavin nucleotides, this protein may be involved in electron transfer for this reduction. In terms of biological role, the 1,2-PD-specific bacterial microcompartment (BMC) concentrates low levels of 1,2-PD catabolic enzymes, concentrates volatile reaction intermediates thus enhancing pathway flux and keeps the level of toxic, mutagenic propionaldehyde low. The sequence is that of Cobalamin reductase PduS from Salmonella typhimurium (strain LT2 / SGSC1412 / ATCC 700720).